The following is a 212-amino-acid chain: Probable transaldolase (212 aa).

Lys84 functions as the Schiff-base intermediate with substrate in the catalytic mechanism.

Belongs to the transaldolase family. Type 3B subfamily.

Its subcellular location is the cytoplasm. It carries out the reaction D-sedoheptulose 7-phosphate + D-glyceraldehyde 3-phosphate = D-erythrose 4-phosphate + beta-D-fructose 6-phosphate. The protein operates within carbohydrate degradation; pentose phosphate pathway; D-glyceraldehyde 3-phosphate and beta-D-fructose 6-phosphate from D-ribose 5-phosphate and D-xylulose 5-phosphate (non-oxidative stage): step 2/3. In terms of biological role, transaldolase is important for the balance of metabolites in the pentose-phosphate pathway. The sequence is that of Probable transaldolase from Bacillus pumilus (strain SAFR-032).